Reading from the N-terminus, the 288-residue chain is ATP synthase subunit a (288 aa).

The next 6 helical transmembrane spans lie at 47–67, 104–124, 157–177, 199–219, 237–257, and 258–278; these read LDSM…FWMV, LIAP…LMDL, DPNI…FYSI, PIVQ…TLIA, LIFI…SVPW, and AIFH…LTIV.

The protein belongs to the ATPase A chain family. As to quaternary structure, F-type ATPases have 2 components, CF(1) - the catalytic core - and CF(0) - the membrane proton channel. CF(1) has five subunits: alpha(3), beta(3), gamma(1), delta(1), epsilon(1). CF(0) has three main subunits: a(1), b(2) and c(9-12). The alpha and beta chains form an alternating ring which encloses part of the gamma chain. CF(1) is attached to CF(0) by a central stalk formed by the gamma and epsilon chains, while a peripheral stalk is formed by the delta and b chains.

The protein localises to the cell inner membrane. In terms of biological role, key component of the proton channel; it plays a direct role in the translocation of protons across the membrane. The protein is ATP synthase subunit a of Psychrobacter cryohalolentis (strain ATCC BAA-1226 / DSM 17306 / VKM B-2378 / K5).